Reading from the N-terminus, the 158-residue chain is Transcriptional repressor NrdR (158 aa).

The segment at 3–34 (CPSCQNTDSRVLESRAADGGRSVRRRRECLNC) is a zinc-finger region. The region spanning 49-139 (ITVIKRDGCR…VYRQFRGIDD (91 aa)) is the ATP-cone domain.

It belongs to the NrdR family. Zn(2+) serves as cofactor.

Functionally, negatively regulates transcription of bacterial ribonucleotide reductase nrd genes and operons by binding to NrdR-boxes. This Synechococcus sp. (strain CC9902) protein is Transcriptional repressor NrdR.